Here is a 103-residue protein sequence, read N- to C-terminus: Small ribosomal subunit protein uS10 (103 aa).

Belongs to the universal ribosomal protein uS10 family. Part of the 30S ribosomal subunit.

In terms of biological role, involved in the binding of tRNA to the ribosomes. The polypeptide is Small ribosomal subunit protein uS10 (Neisseria meningitidis serogroup C / serotype 2a (strain ATCC 700532 / DSM 15464 / FAM18)).